A 237-amino-acid polypeptide reads, in one-letter code: Small ribosomal subunit protein eS4 (237 aa).

Residues 37 to 100 (IPLAVLLRDV…NEYYRIIPDP (64 aa)) enclose the S4 RNA-binding domain.

Belongs to the eukaryotic ribosomal protein eS4 family.

This Caldivirga maquilingensis (strain ATCC 700844 / DSM 13496 / JCM 10307 / IC-167) protein is Small ribosomal subunit protein eS4.